The chain runs to 466 residues: Phage-like element PBSX protein XkdK (466 aa).

This sequence belongs to the myoviridae tail sheath protein family.

The sequence is that of Phage-like element PBSX protein XkdK (xkdK) from Bacillus subtilis (strain 168).